Reading from the N-terminus, the 135-residue chain is Ribonuclease P protein component (135 aa).

The interval 115–135 (TNETVSPVSDTPLPQHERGSQ) is disordered.

This sequence belongs to the RnpA family. In terms of assembly, consists of a catalytic RNA component (M1 or rnpB) and a protein subunit.

It catalyses the reaction Endonucleolytic cleavage of RNA, removing 5'-extranucleotides from tRNA precursor.. RNaseP catalyzes the removal of the 5'-leader sequence from pre-tRNA to produce the mature 5'-terminus. It can also cleave other RNA substrates such as 4.5S RNA. The protein component plays an auxiliary but essential role in vivo by binding to the 5'-leader sequence and broadening the substrate specificity of the ribozyme. The sequence is that of Ribonuclease P protein component from Chloroflexus aurantiacus (strain ATCC 29366 / DSM 635 / J-10-fl).